A 57-amino-acid polypeptide reads, in one-letter code: Small hydrophobic protein (57 aa).

At 1 to 8 the chain is on the virion surface side; the sequence is MPAIQPPL. The chain crosses the membrane as a helical span at residues 9 to 29; sequence YLTFLLLILLYRIITLYVWVV. Topologically, residues 30–57 are intravirion; the sequence is STITYKTAVRHAALYQRSLFRWSFDHSL.

It belongs to the rubulavirus small hydrophobic protein family. In terms of assembly, interacts with host TNFRSF1A, RIPK1 and IRAK1; these interactions interfere with host NF-kappa-B activation at the level of receptor complexes. Interacts with host protein UBQLN4.

The protein localises to the virion membrane. Its subcellular location is the host cell membrane. In terms of biological role, plays a role in the inhibition of the host NF-kappa-B pathway. This inhibition occurs at the receptor level, by preventing the signaling of TNFR1 as well as IL-1R and TLR3. This Mumps virus (strain Belfast) (MuV) protein is Small hydrophobic protein (SH).